Consider the following 144-residue polypeptide: Deoxyuridine 5'-triphosphate nucleotidohydrolase (144 aa).

Residues R63–G65, N76, and T80–D82 contribute to the substrate site.

Belongs to the dUTPase family. Mg(2+) serves as cofactor.

The enzyme catalyses dUTP + H2O = dUMP + diphosphate + H(+). The protein operates within pyrimidine metabolism; dUMP biosynthesis; dUMP from dCTP (dUTP route): step 2/2. Its function is as follows. This enzyme is involved in nucleotide metabolism: it produces dUMP, the immediate precursor of thymidine nucleotides and it decreases the intracellular concentration of dUTP so that uracil cannot be incorporated into DNA. The chain is Deoxyuridine 5'-triphosphate nucleotidohydrolase from Treponema denticola (strain ATCC 35405 / DSM 14222 / CIP 103919 / JCM 8153 / KCTC 15104).